The primary structure comprises 351 residues: MTMKMMVHIYFVSLLLLLFHSYAIDIENEITEFFNKMRDTLPAKDSKWLNPACMFGGTMNDIAALGEPFSAKCPPIEDSLLSHRYKDYVVKWERLEKNRRRQVSNKRVKHGDLWIANYTSKFSNRRYLCTVTTKNGDCVQGIVRSHIRKPPSCIPKTYELGTHDKYGIDLYCGILYAKHYNNITWYKDNKEINIDDIKYSQTGKELIIHNPELEDSGRYDCYVHYDDVRIKNDIVVSRCKILTVIPSQDHRFKLILDPKINVTIGEPANITCTAVSTSLLIDDVLIEWENPSGWLIGFDFDVYSVLTSRGGITEATLYFENVTEEYIGNTYKCRGHNYYFEKTLTTTVVLE.

The first 19 residues, 1 to 19 (MTMKMMVHIYFVSLLLLLF), serve as a signal peptide directing secretion. Ig-like C2-type domains lie at 65 to 147 (LGEP…RSHI) and 155 to 237 (PKTY…IVVS). 2 disulfide bridges follow: C73/C129 and C172/C221. N-linked (GlcNAc...) asparagine; by host glycosylation is found at N117, N182, N261, N269, and N321. One can recognise an Ig-like V-type domain in the interval 246–345 (PSQDHRFKLI…HNYYFEKTLT (100 aa)). C272 and C333 are disulfide-bonded.

Belongs to the interleukin-1 receptor family. Interacts with host IFNA1.

It is found in the secreted. Counteracts the antiviral effects of host IFN-alpha/beta and key IFN-inducible proteins involved in viral RNA degradation suxh as host OAS1. Acts as a soluble IFN-alpha receptor and thus inhibits the interaction between host IFN-alpha and its receptor. The protein is Soluble interferon alpha/beta receptor OPG204 (OPG204) of Vaccinia virus (strain Western Reserve) (VACV).